A 266-amino-acid chain; its full sequence is Luciferase (266 aa).

A helical membrane pass occupies residues 22 to 41 (GLAAACCALAVASTIAFPYI).

This sequence belongs to the fungal luciferase family.

It localises to the membrane. The enzyme catalyses 3-hydroxyhispidin + O2 = (E)-caffeoylpyruvate + hnu + CO2. It carries out the reaction 3-hydroxyhispidin + O2 = 4-[(E)-2-(3,4-dihydroxyphenyl)ethenyl]-1,7-dihydroxy-2,3,5-trioxabicyclo[2.2.2]oct-7-en-6-one. Its function is as follows. Luciferase; part of the gene cluster that mediates the fungal bioluminescence cycle. Uses the fungal luciferin 3-hydroxyhispidin as a substrate to produce an endoperoxide as a high-energy intermediate with decomposition that yields oxyluciferin (also known as caffeoylpyruvate) and light emission. The fungal bioluminescence cycle begins with the hispidin synthetase that catalyzes the formation of hispidin which is further hydroxylated by the hispidin-3-hydroxylase, yielding the fungal luciferin 3-hydroxyhispidin. The luciferase then produces an endoperoxide as a high-energy intermediate with decomposition that yields oxyluciferin and light emission. Oxyluciferin can be recycled to caffeic acid by caffeoylpyruvate hydrolase. In Armillaria gallica (Bulbous honey fungus), this protein is Luciferase.